A 200-amino-acid chain; its full sequence is Mpv17-like protein 2 (200 aa).

Helical transmembrane passes span Ala-24–Gly-40, Ala-63–Leu-83, and Val-102–Gly-122.

The protein belongs to the peroxisomal membrane protein PXMP2/4 family. In terms of assembly, interacts with the large mitochondrial ribosomal subunit.

It is found in the membrane. The protein resides in the mitochondrion inner membrane. In terms of biological role, required for the assembly and stability of the mitochondrial ribosome. Is a positive regulator of mitochondrial protein synthesis. This Mus musculus (Mouse) protein is Mpv17-like protein 2 (Mpv17l2).